Consider the following 284-residue polypeptide: Bifunctional protein FolD (284 aa).

Residues 166–168, S191, and I232 each bind NADP(+); that span reads GAS.

The protein belongs to the tetrahydrofolate dehydrogenase/cyclohydrolase family. Homodimer.

The catalysed reaction is (6R)-5,10-methylene-5,6,7,8-tetrahydrofolate + NADP(+) = (6R)-5,10-methenyltetrahydrofolate + NADPH. The enzyme catalyses (6R)-5,10-methenyltetrahydrofolate + H2O = (6R)-10-formyltetrahydrofolate + H(+). It functions in the pathway one-carbon metabolism; tetrahydrofolate interconversion. In terms of biological role, catalyzes the oxidation of 5,10-methylenetetrahydrofolate to 5,10-methenyltetrahydrofolate and then the hydrolysis of 5,10-methenyltetrahydrofolate to 10-formyltetrahydrofolate. This chain is Bifunctional protein FolD, found in Neisseria meningitidis serogroup C (strain 053442).